We begin with the raw amino-acid sequence, 447 residues long: Oxysterols receptor LXR-alpha (447 aa).

Disordered stretches follow at residues M1–S37 and A65–P88. A transactivation AF-1; required for ligand-independent transactivation function region spans residues M1 to E96. Low complexity predominate over residues G24–S37. Residues N95–S170 constitute a DNA-binding region (nuclear receptor). 2 NR C4-type zinc fingers span residues C98–C118 and C134–C158. The disordered stretch occupies residues K180–I202. Positions Q205–E447 are transactivation AF-2; required for ligand-dependent transactivation function; mediates interaction with CCAR2. The 239-residue stretch at E209–E447 folds into the NR LBD domain.

It belongs to the nuclear hormone receptor family. NR1 subfamily. Heterodimer of NR1H3 and RXR (retinoic acid receptor). Interacts with CCAR2 (via N-terminus) in a ligand-independent manner. Interacts with SIRT1 and this interaction is inhibited by CCAR2. Interacts with GPS2. Post-translationally, ubiquitinated by UBR5, leading to its degradation: UBR5 specifically recognizes and binds ligand-bound NR1H3 when it is not associated with coactivators (NCOAs). In presence of NCOAs, the UBR5-degron is not accessible, preventing its ubiquitination and degradation. Visceral organs specific expression. Strong expression was found in liver, kidney and intestine followed by spleen and to a lesser extent the adrenals.

It is found in the nucleus. Its subcellular location is the cytoplasm. Its function is as follows. Nuclear receptor that exhibits a ligand-dependent transcriptional activation activity. Interaction with retinoic acid receptor (RXR) shifts RXR from its role as a silent DNA-binding partner to an active ligand-binding subunit in mediating retinoid responses through target genes defined by LXRES. LXRES are DR4-type response elements characterized by direct repeats of two similar hexanuclotide half-sites spaced by four nucleotides. Plays an important role in the regulation of cholesterol homeostasis, regulating cholesterol uptake through MYLIP-dependent ubiquitination of LDLR, VLDLR and LRP8. Interplays functionally with RORA for the regulation of genes involved in liver metabolism. Induces LPCAT3-dependent phospholipid remodeling in endoplasmic reticulum (ER) membranes of hepatocytes, driving SREBF1 processing and lipogenesis. Via LPCAT3, triggers the incorporation of arachidonate into phosphatidylcholines of ER membranes, increasing membrane dynamics and enabling triacylglycerols transfer to nascent very low-density lipoprotein (VLDL) particles. Via LPCAT3 also counteracts lipid-induced ER stress response and inflammation, likely by modulating SRC kinase membrane compartmentalization and limiting the synthesis of lipid inflammatory mediators. The chain is Oxysterols receptor LXR-alpha (NR1H3) from Homo sapiens (Human).